A 541-amino-acid polypeptide reads, in one-letter code: GMP synthase [glutamine-hydrolyzing] (541 aa).

Residues 17 to 212 (TILVLDFGSQ…AVDICQSTTD (196 aa)) form the Glutamine amidotransferase type-1 domain. Residue cysteine 93 is the Nucleophile of the active site. Residues histidine 186 and glutamate 188 contribute to the active site. Residues 213-416 (WTMGKFVDQE…LGIPEDLVWR (204 aa)) form the GMPS ATP-PPase domain. Residue 241 to 247 (SGGVDST) coordinates ATP. XMP is bound by residues arginine 315, aspartate 478, lysine 533, and glutamate 539.

Homodimer. The cofactor is Mg(2+).

The protein localises to the cytoplasm. It localises to the cytosol. It carries out the reaction XMP + L-glutamine + ATP + H2O = GMP + L-glutamate + AMP + diphosphate + 2 H(+). It participates in purine metabolism; GMP biosynthesis; GMP from XMP (L-Gln route): step 1/1. Catalyzes the conversion of xanthine monophosphate (XMP) to GMP in the presence of glutamine and ATP through an adenyl-XMP intermediate. The sequence is that of GMP synthase [glutamine-hydrolyzing] (GUA1) from Phaeosphaeria nodorum (strain SN15 / ATCC MYA-4574 / FGSC 10173) (Glume blotch fungus).